We begin with the raw amino-acid sequence, 527 residues long: Glucose-6-phosphate isomerase (527 aa).

Glutamate 323 (proton donor) is an active-site residue. Catalysis depends on residues histidine 352 and lysine 454.

Belongs to the GPI family.

The protein localises to the cytoplasm. It catalyses the reaction alpha-D-glucose 6-phosphate = beta-D-fructose 6-phosphate. Its pathway is carbohydrate biosynthesis; gluconeogenesis. The protein operates within carbohydrate degradation; glycolysis; D-glyceraldehyde 3-phosphate and glycerone phosphate from D-glucose: step 2/4. Catalyzes the reversible isomerization of glucose-6-phosphate to fructose-6-phosphate. This chain is Glucose-6-phosphate isomerase, found in Prochlorococcus marinus (strain MIT 9312).